Reading from the N-terminus, the 481-residue chain is Phototropic-responsive NPH3 family protein NPY4 (481 aa).

One can recognise a BTB domain in the interval 29–102; it reads TEIIIIIGNV…CYGITVTLNA (74 aa). The NPH3 domain maps to 207-450; that stretch reads DWWVEDLCEL…VQVLFFEQIR (244 aa). A Phosphotyrosine modification is found at tyrosine 391. The interval 456-481 is disordered; the sequence is TGYSTPELTTTTLNTEDDEWDHEKEF. The segment covering 460-469 has biased composition (low complexity); it reads TPELTTTTLN.

It belongs to the NPH3 family. Expressed in the hypocotyl cells that would differentiate into vascular bundles. Highly expressed in primary root tips and radicles.

It localises to the cell membrane. The protein localises to the cytoplasm. It is found in the cytosol. It participates in protein modification; protein ubiquitination. Its function is as follows. May act as a substrate-specific adapter of an E3 ubiquitin-protein ligase complex (CUL3-RBX1-BTB) which mediates the ubiquitination and subsequent proteasomal degradation of target proteins. Plays an essential role in auxin-mediated organogenesis and in root gravitropic responses through the control of PIN proteins (e.g. PIN1 and PIN2) polarity in the root tip endodermal cell layer and in shoot epidermis. Recruited to the plasma membrane by PINs (e.g. PIN1 and PIN2) and, in concert with AGC kinases-mediated (e.g. D6PK and PID) PINs phosphorylation, maintains their polarity through limiting lateral diffusion-based escape. The protein is Phototropic-responsive NPH3 family protein NPY4 of Arabidopsis thaliana (Mouse-ear cress).